We begin with the raw amino-acid sequence, 625 residues long: Glutamine--fructose-6-phosphate aminotransferase [isomerizing] (625 aa).

The active-site Nucleophile; for GATase activity is the C2. Residues 2 to 229 (CGLVGYVGQR…QDQAVVITAD (228 aa)) form the Glutamine amidotransferase type-2 domain. SIS domains follow at residues 298–437 (SDQE…ARGT) and 470–615 (LAYR…VDKP). K620 serves as the catalytic For Fru-6P isomerization activity.

In terms of assembly, homodimer.

Its subcellular location is the cytoplasm. The catalysed reaction is D-fructose 6-phosphate + L-glutamine = D-glucosamine 6-phosphate + L-glutamate. Catalyzes the first step in hexosamine metabolism, converting fructose-6P into glucosamine-6P using glutamine as a nitrogen source. The chain is Glutamine--fructose-6-phosphate aminotransferase [isomerizing] from Mycobacterium leprae (strain TN).